Reading from the N-terminus, the 469-residue chain is Putative dipeptidase MW1694 (469 aa).

His-84 serves as a coordination point for Zn(2+). Asp-86 is a catalytic residue. Residue Asp-115 coordinates Zn(2+). Glu-149 (proton acceptor) is an active-site residue. Glu-150, Asp-173, and His-440 together coordinate Zn(2+).

It belongs to the peptidase M20A family. The cofactor is Zn(2+).

This is Putative dipeptidase MW1694 from Staphylococcus aureus (strain MW2).